Consider the following 234-residue polypeptide: Triosephosphate isomerase (234 aa).

Residue 8-10 (NFK) participates in substrate binding. The Electrophile role is filled by His-90. The Proton acceptor role is filled by Glu-159. Gly-165 and Ser-197 together coordinate substrate.

Belongs to the triosephosphate isomerase family. In terms of assembly, homodimer.

Its subcellular location is the cytoplasm. The enzyme catalyses D-glyceraldehyde 3-phosphate = dihydroxyacetone phosphate. It functions in the pathway carbohydrate biosynthesis; gluconeogenesis. Its pathway is carbohydrate degradation; glycolysis; D-glyceraldehyde 3-phosphate from glycerone phosphate: step 1/1. Functionally, involved in the gluconeogenesis. Catalyzes stereospecifically the conversion of dihydroxyacetone phosphate (DHAP) to D-glyceraldehyde-3-phosphate (G3P). The sequence is that of Triosephosphate isomerase from Helicobacter pylori (strain Shi470).